Consider the following 232-residue polypeptide: Orotidine 5'-phosphate decarboxylase (232 aa).

Substrate-binding positions include D13, K35, 62–71 (DLKFHDIPNT), T122, R182, Q191, G211, and R212. Catalysis depends on K64, which acts as the Proton donor.

Belongs to the OMP decarboxylase family. Type 1 subfamily. Homodimer.

It catalyses the reaction orotidine 5'-phosphate + H(+) = UMP + CO2. Its pathway is pyrimidine metabolism; UMP biosynthesis via de novo pathway; UMP from orotate: step 2/2. In terms of biological role, catalyzes the decarboxylation of orotidine 5'-monophosphate (OMP) to uridine 5'-monophosphate (UMP). The protein is Orotidine 5'-phosphate decarboxylase of Pseudomonas savastanoi pv. phaseolicola (strain 1448A / Race 6) (Pseudomonas syringae pv. phaseolicola (strain 1448A / Race 6)).